The primary structure comprises 332 residues: NADH-quinone oxidoreductase subunit H (332 aa).

A run of 9 helical transmembrane segments spans residues 8–28, 44–66, 78–98, 120–140, 157–177, 196–216, 245–265, 274–294, and 312–332; these read IIEC…LAGF, IGPN…KLFA, PIFI…MAPI, VGIL…LLAG, IQFL…LMII, WLIF…YVEL, MFFI…SLVF, FIPG…LFMW, and WKIM…ILLF.

This sequence belongs to the complex I subunit 1 family. NDH-1 is composed of 14 different subunits. Subunits NuoA, H, J, K, L, M, N constitute the membrane sector of the complex.

It is found in the cell inner membrane. The catalysed reaction is a quinone + NADH + 5 H(+)(in) = a quinol + NAD(+) + 4 H(+)(out). In terms of biological role, NDH-1 shuttles electrons from NADH, via FMN and iron-sulfur (Fe-S) centers, to quinones in the respiratory chain. The immediate electron acceptor for the enzyme in this species is believed to be ubiquinone. Couples the redox reaction to proton translocation (for every two electrons transferred, four hydrogen ions are translocated across the cytoplasmic membrane), and thus conserves the redox energy in a proton gradient. This subunit may bind ubiquinone. In Helicobacter hepaticus (strain ATCC 51449 / 3B1), this protein is NADH-quinone oxidoreductase subunit H.